The sequence spans 179 residues: Large ribosomal subunit protein bL25 (179 aa).

Belongs to the bacterial ribosomal protein bL25 family. CTC subfamily. As to quaternary structure, part of the 50S ribosomal subunit; part of the 5S rRNA/L5/L18/L25 subcomplex. Contacts the 5S rRNA. Binds to the 5S rRNA independently of L5 and L18.

This is one of the proteins that binds to the 5S RNA in the ribosome where it forms part of the central protuberance. The sequence is that of Large ribosomal subunit protein bL25 from Desulfitobacterium hafniense (strain DSM 10664 / DCB-2).